A 533-amino-acid chain; its full sequence is Beta-apo-4'-carotenal oxygenase (533 aa).

Active-site residues include glutamate 226 and cysteine 260.

It belongs to the aldehyde dehydrogenase family.

The enzyme catalyses 4'-apo-beta-carotenal + NAD(+) + H2O = neurosporaxanthin + NADH + 2 H(+). Beta-apo-4'-carotenal oxygenase involved in the last step of synthesis of neurosporaxanthin, a carboxylic apocarotenoid acting as an essential protective pigment and leading to orange pigmentation. Converts the aldehyde beta-apo-4'-carotenal into neurosporaxanthin. Neurosporaxanthin is synthesized from geranyl-geranyl pyrophosphate (GGPP) through several enzymatic activities. Phytoene synthase activity performed by the bifunctional enzyme al-2 first produces phytoene from geranyl-geranyl pyrophosphate (GGPP). The phytoene dehydrogenase al-1 then introduces 5 desaturations to lead to 3,4-didehydrolycopene via the intermediates phytofluene, zeta-carotene, neurosporene and lycopene. Al-2 cyclase activity then converts 3,4-didehydrolycopene into torulene. Al-2 can also convet lycopene into gamma-carotene which in turn is converted to beta-carotene by an additional al-2 cyclization reaction. Torulene is the substrate of the dioxidase cao-2 that breaks the molecule, removing five carbon atoms to yield beta-apo-4'-carotenal, whereas the aldehyde dehydrogenase ylo-1 mediates the last step by converting beta-apo-4'-carotenal into neurosporaxanthin. This is Beta-apo-4'-carotenal oxygenase from Neurospora crassa (strain ATCC 24698 / 74-OR23-1A / CBS 708.71 / DSM 1257 / FGSC 987).